Consider the following 232-residue polypeptide: Large ribosomal subunit protein uL1 (232 aa).

Belongs to the universal ribosomal protein uL1 family. In terms of assembly, part of the 50S ribosomal subunit.

Functionally, binds directly to 23S rRNA. The L1 stalk is quite mobile in the ribosome, and is involved in E site tRNA release. In terms of biological role, protein L1 is also a translational repressor protein, it controls the translation of the L11 operon by binding to its mRNA. The polypeptide is Large ribosomal subunit protein uL1 (Porphyromonas gingivalis (strain ATCC 33277 / DSM 20709 / CIP 103683 / JCM 12257 / NCTC 11834 / 2561)).